The primary structure comprises 219 residues: Cytidylate kinase (219 aa).

10–18 serves as a coordination point for ATP; that stretch reads GPAAAGKST.

It belongs to the cytidylate kinase family. Type 1 subfamily.

It is found in the cytoplasm. It carries out the reaction CMP + ATP = CDP + ADP. It catalyses the reaction dCMP + ATP = dCDP + ADP. In Staphylococcus aureus (strain JH9), this protein is Cytidylate kinase.